A 313-amino-acid chain; its full sequence is Kazal-type serine protease inhibitor domain-containing protein 1 (313 aa).

Residues 1–37 form the signal peptide; sequence MPRVFTGLPANYAAPTLALSLLLPLLLVVWTQLPVSA. The IGFBP N-terminal domain maps to 56 to 136; it reads EGEGCAPCRP…EVPEPLCVCR (81 aa). 7 cysteine pairs are disulfide-bonded: cysteine 60–cysteine 83, cysteine 63–cysteine 85, cysteine 68–cysteine 86, cysteine 74–cysteine 89, cysteine 97–cysteine 115, cysteine 109–cysteine 133, and cysteine 142–cysteine 175. One can recognise a Kazal-like domain in the interval 127-177; sequence EVPEPLCVCRSQRPLCGSDGRTYAQICRLQEAARARLDANLTVVHPGPCES. N-linked (GlcNAc...) asparagine glycans are attached at residues asparagine 166 and asparagine 190. The Ig-like C2-type domain occupies 179-276; it reads PQILSQPHNI…GQAEASATLT (98 aa). Cysteine 200 and cysteine 260 form a disulfide bridge. N-linked (GlcNAc...) asparagine glycosylation occurs at asparagine 284. Residues 290-313 are disordered; sequence QLQSRSLFPEEEEEAESEELGDYY. Acidic residues predominate over residues 298-313; it reads PEEEEEAESEELGDYY.

Highly expressed in the spleen. Moderately expressed in the skin, lung and urinary bladder. Weakly expressed in the brain, tongue, esophagus, stomach, large intestine, liver and bone. Expressed in osteoblastic cells during bone regeneration. Expressed in secretory osteoblasts in the tooth.

It localises to the secreted. The protein localises to the extracellular space. The protein resides in the extracellular matrix. In terms of biological role, involved in the proliferation of osteoblasts during bone formation and bone regeneration. Promotes matrix assembly. In Mus musculus (Mouse), this protein is Kazal-type serine protease inhibitor domain-containing protein 1 (Kazald1).